Here is a 299-residue protein sequence, read N- to C-terminus: ATP phosphoribosyltransferase (299 aa).

This sequence belongs to the ATP phosphoribosyltransferase family. Long subfamily. In terms of assembly, equilibrium between an active dimeric form, an inactive hexameric form and higher aggregates. Interconversion between the various forms is largely reversible and is influenced by the natural substrates and inhibitors of the enzyme. Mg(2+) is required as a cofactor.

The protein localises to the cytoplasm. It catalyses the reaction 1-(5-phospho-beta-D-ribosyl)-ATP + diphosphate = 5-phospho-alpha-D-ribose 1-diphosphate + ATP. Its pathway is amino-acid biosynthesis; L-histidine biosynthesis; L-histidine from 5-phospho-alpha-D-ribose 1-diphosphate: step 1/9. Feedback inhibited by histidine. In terms of biological role, catalyzes the condensation of ATP and 5-phosphoribose 1-diphosphate to form N'-(5'-phosphoribosyl)-ATP (PR-ATP). Has a crucial role in the pathway because the rate of histidine biosynthesis seems to be controlled primarily by regulation of HisG enzymatic activity. The sequence is that of ATP phosphoribosyltransferase from Buchnera aphidicola subsp. Baizongia pistaciae (strain Bp).